The primary structure comprises 531 residues: T-complex protein 1 subunit zeta (531 aa).

Ala2 carries the N-acetylalanine modification. At Lys5 the chain carries N6-acetyllysine. Position 39 (Gly39) interacts with ADP. Residue Gly39 coordinates ATP. Mg(2+) is bound at residue Asp90. ADP is bound by residues Gly91, Thr92, Thr93, Ser94, Thr158, and Lys159. Positions 91, 92, and 93 each coordinate ATP. Residue Lys199 is modified to N6-acetyllysine. A Phosphoserine modification is found at Ser205. A Glycyl lysine isopeptide (Lys-Gly) (interchain with G-Cter in SUMO2) cross-link involves residue Lys251. N6-acetyllysine occurs at positions 287, 365, 377, and 388. Ala411 serves as a coordination point for ADP. Residues Ala411, Gly412, Asp496, and Lys501 each coordinate ATP. Asp496 provides a ligand contact to ADP.

It belongs to the TCP-1 chaperonin family. Component of the chaperonin-containing T-complex (TRiC), a hexadecamer composed of two identical back-to-back stacked rings enclosing a protein folding chamber. Each ring is made up of eight different subunits: TCP1/CCT1, CCT2, CCT3, CCT4, CCT5, CCT6A/CCT6, CCT7, CCT8. Interacts with PACRG.

The protein resides in the cytoplasm. The catalysed reaction is ATP + H2O = ADP + phosphate + H(+). Its function is as follows. Component of the chaperonin-containing T-complex (TRiC), a molecular chaperone complex that assists the folding of actin, tubulin and other proteins upon ATP hydrolysis. The TRiC complex mediates the folding of WRAP53/TCAB1, thereby regulating telomere maintenance. In Oryctolagus cuniculus (Rabbit), this protein is T-complex protein 1 subunit zeta (CCT6).